The chain runs to 251 residues: Probable transcriptional regulatory protein DehaBAV1_0421 (251 aa).

It belongs to the TACO1 family.

Its subcellular location is the cytoplasm. In Dehalococcoides mccartyi (strain ATCC BAA-2100 / JCM 16839 / KCTC 5957 / BAV1), this protein is Probable transcriptional regulatory protein DehaBAV1_0421.